A 501-amino-acid chain; its full sequence is Cystine/glutamate transporter (501 aa).

Residues 1-43 lie on the Cytoplasmic side of the membrane; the sequence is MVRKPVVSTISKGGYLQGNVNGRLPSLGNKEPPGQEKVQLKRK. Ser26 is subject to Phosphoserine. The chain crosses the membrane as a helical span at residues 44-64; it reads VTLLRGVSIIIGTIIGAGIFI. At 65-74 the chain is on the extracellular side; it reads SPKGVLQNTG. The helical transmembrane segment at 75–95 threads the bilayer; it reads SVGMSLTIWTVCGVLSLFGAL. Topologically, residues 96–101 are cytoplasmic; that stretch reads SYAELG. Residues 102–116 lie within the membrane without spanning it; sequence TTIKKSGGHYTYILE. Residues 117 to 130 are Cytoplasmic-facing; the sequence is VFGPLPAFVRVWVE. Residues 131–150 traverse the membrane as a helical segment; the sequence is LLIIRPAATAVISLAFGRYI. Residue Arg135 participates in L-glutamate binding. At 151-163 the chain is on the extracellular side; sequence LEPFFIQCEIPEL. The helical transmembrane segment at 164-179 threads the bilayer; sequence AIKLITAVGITVVMVL. The Cytoplasmic portion of the chain corresponds to 180–193; sequence NSMSVSWSARIQIF. A helical transmembrane segment spans residues 194–210; that stretch reads LTFCKLTAILIIIVPGV. The Extracellular portion of the chain corresponds to 211–234; that stretch reads MQLIKGQTQNFKDAFSGRDSSITR. A helical membrane pass occupies residues 235–255; that stretch reads LPLAFYYGMYAYAGWFYLNFV. Tyr244 lines the L-glutamate pocket. Topologically, residues 256-265 are cytoplasmic; it reads TEEVENPEKT. A helical transmembrane segment spans residues 266–286; sequence IPLAICISMAIVTIGYVLTNV. Residues 287–317 lie on the Extracellular side of the membrane; sequence AYFTTINAEELLLSNAVAVTFSERLLGNFSL. Asn314 carries an N-linked (GlcNAc...) asparagine glycan. Residues 318 to 338 form a helical membrane-spanning segment; sequence AVPIFVALSCFGSMNGGVFAV. Residues 339-364 are Cytoplasmic-facing; that stretch reads SRLFYVASREGHLPEILSMIHVRKHT. The helical transmembrane segment at 365–385 threads the bilayer; sequence PLPAVIVLHPLTMIMLFSGDL. Residues 386–387 are Extracellular-facing; that stretch reads DS. The chain crosses the membrane as a helical span at residues 388-408; that stretch reads LLNFLSFARWLFIGLAVAGLI. The Cytoplasmic segment spans residues 409–422; sequence YLRYKCPDMHRPFK. Residues 423–443 form a helical membrane-spanning segment; the sequence is VPLFIPALFSFTCLFMVALSL. The Extracellular portion of the chain corresponds to 444-449; that stretch reads YSDPFS. The helical transmembrane segment at 450–470 threads the bilayer; it reads TGIGFVITLTGVPAYYLFIIW. The Cytoplasmic portion of the chain corresponds to 471-501; it reads DKKPRWFRIMSEKITRTLQIILEVVPEEDKL.

This sequence belongs to the amino acid-polyamine-organocation (APC) superfamily. L-type amino acid transporter (LAT) (TC 2.A.3.8) family. In terms of assembly, disulfide-linked heterodimer with the amino acid transport protein SLC3A2/4F2hc; this interaction mediates cell membrane localization. In terms of processing, ubiquitinated by TRIM26; leading to proteasomal degradation. As to expression, expressed in term placenta and primary term cytotrophoblast. Expressed mainly in the brain, but also in pancreas.

It is found in the cell membrane. Its subcellular location is the cell projection. It localises to the microvillus membrane. The catalysed reaction is L-cystine(out) + L-glutamate(in) = L-cystine(in) + L-glutamate(out). It catalyses the reaction an L-alpha-amino acid(in) + L-kynurenine(out) = an L-alpha-amino acid(out) + L-kynurenine(in). It carries out the reaction N-acetyl-L-cysteine(out) + L-glutamate(in) = N-acetyl-L-cysteine(in) + L-glutamate(out). Inhibited by erastin and sulfasalazine. Inhibited by (S)-lactate. Inactivated by p-chloromercuribenzoic acid and p-chloromercuribenzenesulfonic acid. Heterodimer with SLC3A2, that functions as an antiporter by mediating the exchange of extracellular anionic L-cystine and intracellular L-glutamate across the cellular plasma membrane. Provides L-cystine for the maintenance of the redox balance between extracellular L-cystine and L-cysteine and for the maintenance of the intracellular levels of glutathione that is essential for cells protection from oxidative stress. The transport is sodium-independent, electroneutral with a stoichiometry of 1:1, and is drove by the high intracellular concentration of L-glutamate and the intracellular reduction of L-cystine. In addition, mediates the import of L-kynurenine leading to anti-ferroptotic signaling propagation required to maintain L-cystine and glutathione homeostasis. Moreover, mediates N-acetyl-L-cysteine uptake into the placenta leading to subsequently down-regulation of pathways associated with oxidative stress, inflammation and apoptosis. In vitro can also transport L-aspartate. May participate in astrocyte and meningeal cell proliferation during development and can provide neuroprotection by promoting glutathione synthesis and delivery from non-neuronal cells such as astrocytes and meningeal cells to immature neurons. Controls the production of pheomelanin pigment directly. The protein is Cystine/glutamate transporter of Homo sapiens (Human).